The primary structure comprises 882 residues: Cutinase transcription factor 1 beta (882 aa).

The segment covering 1–20 (MNAETPEGSAAPPSPASTSA) has biased composition (low complexity). The tract at residues 1–49 (MNAETPEGSAAPPSPASTSAKTVTDKTNKKRASPSGDSEQPTKVTKRRA) is disordered. The segment at residues 53–81 (CVSCRARKVRCDVVEGAPCGNCRWDNVEC) is a DNA-binding region (zn(2)-C6 fungal-type). Residues 117–148 (NPMGMSTADLRRPSSGSAISTSSIDGPSSFLS) form a disordered region. Residues 130–139 (SSGSAISTSS) are compositionally biased toward low complexity.

It is found in the nucleus. The protein is Cutinase transcription factor 1 beta (CTF1-BETA) of Fusarium vanettenii (Neocosmospora pisi).